A 155-amino-acid chain; its full sequence is Protein SprT-like (155 aa).

In terms of domain architecture, SprT-like spans 7–145 (QQHMEEVSLQ…GSCGGRLKQT (139 aa)). His-67 is a binding site for Zn(2+). The active site involves Glu-68. His-71 is a binding site for Zn(2+).

This sequence belongs to the SprT family. The cofactor is Zn(2+).

It localises to the cytoplasm. This chain is Protein SprT-like, found in Listeria innocua serovar 6a (strain ATCC BAA-680 / CLIP 11262).